The primary structure comprises 274 residues: MGTPWRKRKGITQVGTMSPAIALAFLPLVVTLLVRYRHYFRLLVGTVLLRSLRDCLSGLRIEERAFSYVLTHALPGDPGHILTTLDHWSSHCEYLSHMGPVKGQILMRLVEEKAPACVLELGTYCGYSTLLIAQALPPGGRLLTVERDPRTAAVAEKLIRLAGFDEHMVELIVGSSEEVIPCLRTQYQLSRADLVLLIHRPRCYLRDLQLLEAHALLPAGATVLADHVLFPGAPRFLQYAKSCGRYRCRLYHTGLPDFPAIKDGIAQLTYAGPG.

Residues 14-34 traverse the membrane as a helical segment; it reads VGTMSPAIALAFLPLVVTLLV. S-adenosyl-L-methionine-binding positions include Glu120, 122-123, Ser128, Glu146, and Ser176; that span reads GT.

It belongs to the class I-like SAM-binding methyltransferase superfamily. Cation-dependent O-methyltransferase family. Interacts with LHFPL5, PCDH15, TMC1, TMC2 and TMIE. Interacts directly with TMC1. The interaction of TOMT with TMC1 and TMC2 is required for the transportation of TMC1/2 into the stereocilia of hair cells.

The protein localises to the membrane. It localises to the cytoplasm. Its subcellular location is the endoplasmic reticulum. It catalyses the reaction a catechol + S-adenosyl-L-methionine = a guaiacol + S-adenosyl-L-homocysteine + H(+). Its function is as follows. Catalyzes the O-methylation, and thereby the inactivation, of catecholamine neurotransmitters and catechol hormones. Required for auditory function. Component of the cochlear hair cell's mechanotransduction (MET) machinery. Involved in the assembly of the asymmetric tip-link MET complex. Required for transportation of TMC1 and TMC2 proteins into the mechanically sensitive stereocilia of the hair cells. The function in MET is independent of the enzymatic activity. This Propithecus coquereli (Coquerel's sifaka) protein is Transmembrane O-methyltransferase.